Reading from the N-terminus, the 491-residue chain is Keratin, type I cytoskeletal 39 (491 aa).

A head region spans residues 1–96; the sequence is MDTKGCTTTN…WYGEGINSNE (96 aa). An IF rod domain is found at 96–407; it reads EKETMQILNE…SLLESSDGKR (312 aa). A coil 1A region spans residues 97-131; sequence KETMQILNERLANYLQKVRMLERENAELESKIQEE. Residues 132-142 are linker 1; it reads SNKELPVLCPD. Positions 143 to 243 are coil 1B; it reads YLSYYTTIEE…HKEEINSLQC (101 aa). The interval 244-259 is linker 12; it reads QLGERLDIEVTAAPSA. Residues 260 to 403 are coil 2; it reads DLNQVLQEMR…TTYRSLLESS (144 aa). The segment at 404-491 is tail; sequence DGKRPCYPRA…PCFIIRPAKV (88 aa).

This sequence belongs to the intermediate filament family. In terms of assembly, heterotetramer of two type I and two type II keratins. Expressed in skin and scalp. In the hair follicle, it is present in the upper hair cuticle and the upper cortex. Also present in the in the upper portion of beard hairs (at protein level).

May play a role in late hair differentiation. This chain is Keratin, type I cytoskeletal 39 (KRT39), found in Homo sapiens (Human).